A 201-amino-acid polypeptide reads, in one-letter code: Cysteine dioxygenase type 1 (201 aa).

Fe cation-binding residues include His86, His88, and His141. The segment at residues 93–158 (CFLKLLQGQL…TEPAVSLHLY (66 aa)) is a cross-link (3'-(S-cysteinyl)-tyrosine (Cys-Tyr)).

This sequence belongs to the cysteine dioxygenase family. As to quaternary structure, monomer. Fe cation is required as a cofactor. The cofactor is Ni(2+). It depends on Zn(2+) as a cofactor. The thioether cross-link between Cys-93 and Tyr-158 plays a structural role through stabilizing the Fe(2+) ion, and prevents the production of highly damaging free hydroxyl radicals by holding the oxygen radical via hydroxyl hydrogen.

It catalyses the reaction L-cysteine + O2 = 3-sulfino-L-alanine + H(+). It participates in organosulfur biosynthesis; taurine biosynthesis; hypotaurine from L-cysteine: step 1/2. Catalyzes the oxidation of cysteine to cysteine sulfinic acid with addition of molecular dioxygen. This chain is Cysteine dioxygenase type 1 (cdo1), found in Danio rerio (Zebrafish).